A 207-amino-acid chain; its full sequence is Outer-membrane lipoprotein carrier protein (207 aa).

An N-terminal signal peptide occupies residues 1–23 (MMKPHNLFQFLAVCSLTVAVASA).

The protein belongs to the LolA family. In terms of assembly, monomer.

It is found in the periplasm. Functionally, participates in the translocation of lipoproteins from the inner membrane to the outer membrane. Only forms a complex with a lipoprotein if the residue after the N-terminal Cys is not an aspartate (The Asp acts as a targeting signal to indicate that the lipoprotein should stay in the inner membrane). This Neisseria gonorrhoeae (strain ATCC 700825 / FA 1090) protein is Outer-membrane lipoprotein carrier protein.